Consider the following 154-residue polypeptide: MSIAQNKKAFHDYFIEEKYEAGIVLEGWEVKAIRENRVQLKEAYVIIQRGEIYLIGCHVTPLGSASTHVRPDAIRTRKLLLHSEQIAKLIGKVERAGYTLVPLDMHYTRGRIKVQIGLAKGKKQYDKRHSEKEKDWKREQSSLMKKYVKTQAGS.

This sequence belongs to the SmpB family.

It is found in the cytoplasm. Its function is as follows. Required for rescue of stalled ribosomes mediated by trans-translation. Binds to transfer-messenger RNA (tmRNA), required for stable association of tmRNA with ribosomes. tmRNA and SmpB together mimic tRNA shape, replacing the anticodon stem-loop with SmpB. tmRNA is encoded by the ssrA gene; the 2 termini fold to resemble tRNA(Ala) and it encodes a 'tag peptide', a short internal open reading frame. During trans-translation Ala-aminoacylated tmRNA acts like a tRNA, entering the A-site of stalled ribosomes, displacing the stalled mRNA. The ribosome then switches to translate the ORF on the tmRNA; the nascent peptide is terminated with the 'tag peptide' encoded by the tmRNA and targeted for degradation. The ribosome is freed to recommence translation, which seems to be the essential function of trans-translation. The sequence is that of SsrA-binding protein from Methylobacillus flagellatus (strain ATCC 51484 / DSM 6875 / VKM B-1610 / KT).